The sequence spans 100 residues: Small ribosomal subunit protein uS14c (100 aa).

The protein belongs to the universal ribosomal protein uS14 family. Part of the 30S ribosomal subunit.

The protein localises to the plastid. The protein resides in the chloroplast. In terms of biological role, binds 16S rRNA, required for the assembly of 30S particles. This chain is Small ribosomal subunit protein uS14c, found in Oenothera argillicola (Appalachian evening primrose).